Here is a 370-residue protein sequence, read N- to C-terminus: MFQPEKHGLEPDFQLTKFTTHTGUSCKIPQKVLEKYLRGTEIENKNNDGYLIGSGMDCAVIPLKRHKDYLLIQTVDFFYPMVNDPELLGRIALANVLSDVYAVGVTQFDTVEMIVSTSTSFSEKERDVVIGLVMKGFQNSLKANGYRNTPLIIRQLKINPWCIIGGIATSVCRSEEIILPSNAQPGDVLVLTKPLGGQMAMDAHLWQLNQTEKYKKLLSECSDADIKETFEIAVKSMTYLNKNAALLMHKYQAHCATDITGFGLLGHANNLAQFQKEKVLFQINKLPIIKNVLKFSTLVGQSTKFRSGRSVETSGGLLICLPADAADKFCRDFEEATNGEQKSFQIGHVTAANESDAVLCEDVEFIEVSL.

Sec24 is an active-site residue. A non-standard amino acid (selenocysteine) is located at residue Sec24. ATP-binding positions include Lys27, 55–57 (GMD), Asp76, and Asp99. Mg(2+) is bound at residue Asp57. Mg(2+) contacts are provided by Asp99 and Asp258.

The protein belongs to the selenophosphate synthase 1 family. Class I subfamily. As to quaternary structure, homodimer. Mg(2+) serves as cofactor. As to expression, first expressed in the midgut anlagen with subsequent expression in a variety of tissues including the gut and nervous system.

The catalysed reaction is hydrogenselenide + ATP + H2O = selenophosphate + AMP + phosphate + 2 H(+). Its function is as follows. Synthesizes selenophosphate from selenide and ATP. This is Selenide, water dikinase 2 (Sps2) from Drosophila melanogaster (Fruit fly).